A 370-amino-acid chain; its full sequence is Glutamate 5-kinase (370 aa).

Residue lysine 17 coordinates ATP. Substrate is bound by residues serine 56, aspartate 143, and asparagine 155. 175-176 (SD) lines the ATP pocket. One can recognise a PUA domain in the interval 280–357 (KGEITVDAGA…DEIEGILGYP (78 aa)).

This sequence belongs to the glutamate 5-kinase family.

Its subcellular location is the cytoplasm. It carries out the reaction L-glutamate + ATP = L-glutamyl 5-phosphate + ADP. The protein operates within amino-acid biosynthesis; L-proline biosynthesis; L-glutamate 5-semialdehyde from L-glutamate: step 1/2. Catalyzes the transfer of a phosphate group to glutamate to form L-glutamate 5-phosphate. In Paracoccus denitrificans (strain Pd 1222), this protein is Glutamate 5-kinase.